The chain runs to 250 residues: 2,3-bisphosphoglycerate-dependent phosphoglycerate mutase (250 aa).

Substrate contacts are provided by residues 10–17, 23–24, Arg62, 89–92, Lys100, 116–117, and 185–186; these read RHGESQWN, TG, ERHY, RR, and GN. His11 serves as the catalytic Tele-phosphohistidine intermediate. Residue Glu89 is the Proton donor/acceptor of the active site.

Belongs to the phosphoglycerate mutase family. BPG-dependent PGAM subfamily. In terms of assembly, homodimer.

It catalyses the reaction (2R)-2-phosphoglycerate = (2R)-3-phosphoglycerate. The protein operates within carbohydrate degradation; glycolysis; pyruvate from D-glyceraldehyde 3-phosphate: step 3/5. Catalyzes the interconversion of 2-phosphoglycerate and 3-phosphoglycerate. The polypeptide is 2,3-bisphosphoglycerate-dependent phosphoglycerate mutase (Pectobacterium atrosepticum (strain SCRI 1043 / ATCC BAA-672) (Erwinia carotovora subsp. atroseptica)).